Consider the following 315-residue polypeptide: Putative quercetin 2,3-dioxygenase PA1205 (315 aa).

A divalent metal cation contacts are provided by histidine 77, histidine 79, histidine 121, and glutamate 123.

Belongs to the pirin family. A divalent metal cation is required as a cofactor.

The catalysed reaction is quercetin + O2 = 2-(3,4-dihydroxybenzoyloxy)-4,6-dihydroxybenzoate + CO. It participates in flavonoid metabolism; quercetin degradation. Its function is as follows. Putative quercetin 2,3-dioxygenase. In Pseudomonas aeruginosa (strain ATCC 15692 / DSM 22644 / CIP 104116 / JCM 14847 / LMG 12228 / 1C / PRS 101 / PAO1), this protein is Putative quercetin 2,3-dioxygenase PA1205.